The primary structure comprises 1007 residues: Probable inorganic carbon transporter subunit DabA (1007 aa).

Zn(2+) is bound by residues Cys-442, Asp-444, His-696, and Cys-711.

It belongs to the inorganic carbon transporter (TC 9.A.2) DabA family. In terms of assembly, forms a complex with DabB. Zn(2+) is required as a cofactor.

It is found in the cell inner membrane. Its function is as follows. Part of an energy-coupled inorganic carbon pump. This Aquifex aeolicus (strain VF5) protein is Probable inorganic carbon transporter subunit DabA.